The following is a 450-amino-acid chain: Exodeoxyribonuclease 7 large subunit (450 aa).

This sequence belongs to the XseA family. Heterooligomer composed of large and small subunits.

It is found in the cytoplasm. The catalysed reaction is Exonucleolytic cleavage in either 5'- to 3'- or 3'- to 5'-direction to yield nucleoside 5'-phosphates.. In terms of biological role, bidirectionally degrades single-stranded DNA into large acid-insoluble oligonucleotides, which are then degraded further into small acid-soluble oligonucleotides. This is Exodeoxyribonuclease 7 large subunit from Shewanella frigidimarina (strain NCIMB 400).